The sequence spans 429 residues: MKKFDKSIAAFEEAQDLMPGGVNSPVRAFKSVGMNPLFMERGKGSKVYDIDGNEYIDYVLSWGPLIHGHANDRVVEALKAVAERGTSFGAPTEIENKLAKLVIERVPSIEIVRMVNSGTEATMSALRLARGYTGRNKILKFIGCYHGHGDSLLIKAGSGVATLGLPDSPGVPEGVAKNTITVAYNDLESVKYAFEQFGDDIACVIVEPVAGNMGVVPPQPGFLEGLREVTEQNGALLIFDEVMTGFRVAYNCGQGYYGVTPDLTCLGKVIGGGLPVGAYGGKAEIMRQVAPSGPIYQAGTLSGNPLAMAAGYETLVQLTPESYVEFERKAEMLEAGLRKAAEKHGIPHHINRAGSMIGIFFTDEPVINYDAAKSSNLQFFAAYYREMVEQGVFLPPSQFEGLFLSTAHSDADIEATIAAAEIAMSKLKA.

Lysine 268 carries the N6-(pyridoxal phosphate)lysine modification.

It belongs to the class-III pyridoxal-phosphate-dependent aminotransferase family. HemL subfamily. In terms of assembly, homodimer. The cofactor is pyridoxal 5'-phosphate.

The protein localises to the cytoplasm. The catalysed reaction is (S)-4-amino-5-oxopentanoate = 5-aminolevulinate. Its pathway is porphyrin-containing compound metabolism; protoporphyrin-IX biosynthesis; 5-aminolevulinate from L-glutamyl-tRNA(Glu): step 2/2. This is Glutamate-1-semialdehyde 2,1-aminomutase 2 from Bacillus thuringiensis (strain Al Hakam).